A 299-amino-acid chain; its full sequence is ATP phosphoribosyltransferase (299 aa).

It belongs to the ATP phosphoribosyltransferase family. Long subfamily. Equilibrium between an active dimeric form, an inactive hexameric form and higher aggregates. Interconversion between the various forms is largely reversible and is influenced by the natural substrates and inhibitors of the enzyme. Requires Mg(2+) as cofactor.

Its subcellular location is the cytoplasm. It carries out the reaction 1-(5-phospho-beta-D-ribosyl)-ATP + diphosphate = 5-phospho-alpha-D-ribose 1-diphosphate + ATP. The protein operates within amino-acid biosynthesis; L-histidine biosynthesis; L-histidine from 5-phospho-alpha-D-ribose 1-diphosphate: step 1/9. Feedback inhibited by histidine. Its function is as follows. Catalyzes the condensation of ATP and 5-phosphoribose 1-diphosphate to form N'-(5'-phosphoribosyl)-ATP (PR-ATP). Has a crucial role in the pathway because the rate of histidine biosynthesis seems to be controlled primarily by regulation of HisG enzymatic activity. The polypeptide is ATP phosphoribosyltransferase (Proteus mirabilis (strain HI4320)).